Reading from the N-terminus, the 300-residue chain is UDP-N-acetylenolpyruvoylglucosamine reductase (300 aa).

Residues 28-190 (KIGGRVKYLV…TRAMMSFKKE (163 aa)) enclose the FAD-binding PCMH-type domain. The active site involves arginine 169. Serine 219 functions as the Proton donor in the catalytic mechanism. Glutamate 290 is a catalytic residue.

The protein belongs to the MurB family. FAD serves as cofactor.

The protein resides in the cytoplasm. The catalysed reaction is UDP-N-acetyl-alpha-D-muramate + NADP(+) = UDP-N-acetyl-3-O-(1-carboxyvinyl)-alpha-D-glucosamine + NADPH + H(+). It participates in cell wall biogenesis; peptidoglycan biosynthesis. In terms of biological role, cell wall formation. The chain is UDP-N-acetylenolpyruvoylglucosamine reductase from Thermotoga sp. (strain RQ2).